Reading from the N-terminus, the 175-residue chain is Crossover junction endodeoxyribonuclease RuvC (175 aa).

Catalysis depends on residues Asp-11, Glu-71, and His-143. Mg(2+)-binding residues include Asp-11, Glu-71, and His-143.

Belongs to the RuvC family. In terms of assembly, homodimer which binds Holliday junction (HJ) DNA. The HJ becomes 2-fold symmetrical on binding to RuvC with unstacked arms; it has a different conformation from HJ DNA in complex with RuvA. In the full resolvosome a probable DNA-RuvA(4)-RuvB(12)-RuvC(2) complex forms which resolves the HJ. Requires Mg(2+) as cofactor.

It is found in the cytoplasm. The catalysed reaction is Endonucleolytic cleavage at a junction such as a reciprocal single-stranded crossover between two homologous DNA duplexes (Holliday junction).. In terms of biological role, the RuvA-RuvB-RuvC complex processes Holliday junction (HJ) DNA during genetic recombination and DNA repair. Endonuclease that resolves HJ intermediates. Cleaves cruciform DNA by making single-stranded nicks across the HJ at symmetrical positions within the homologous arms, yielding a 5'-phosphate and a 3'-hydroxyl group; requires a central core of homology in the junction. The consensus cleavage sequence is 5'-(A/T)TT(C/G)-3'. Cleavage occurs on the 3'-side of the TT dinucleotide at the point of strand exchange. HJ branch migration catalyzed by RuvA-RuvB allows RuvC to scan DNA until it finds its consensus sequence, where it cleaves and resolves the cruciform DNA. The sequence is that of Crossover junction endodeoxyribonuclease RuvC from Parvibaculum lavamentivorans (strain DS-1 / DSM 13023 / NCIMB 13966).